The chain runs to 420 residues: UDP-N-acetylglucosamine 1-carboxyvinyltransferase (420 aa).

Residue 22-23 (KN) participates in phosphoenolpyruvate binding. Residue Arg92 participates in UDP-N-acetyl-alpha-D-glucosamine binding. Catalysis depends on Cys116, which acts as the Proton donor. The residue at position 116 (Cys116) is a 2-(S-cysteinyl)pyruvic acid O-phosphothioketal. Residues 121 to 125 (RPVDQ), Asp304, and Ile326 each bind UDP-N-acetyl-alpha-D-glucosamine.

It belongs to the EPSP synthase family. MurA subfamily.

Its subcellular location is the cytoplasm. The catalysed reaction is phosphoenolpyruvate + UDP-N-acetyl-alpha-D-glucosamine = UDP-N-acetyl-3-O-(1-carboxyvinyl)-alpha-D-glucosamine + phosphate. It participates in cell wall biogenesis; peptidoglycan biosynthesis. In terms of biological role, cell wall formation. Adds enolpyruvyl to UDP-N-acetylglucosamine. This chain is UDP-N-acetylglucosamine 1-carboxyvinyltransferase, found in Paraburkholderia phytofirmans (strain DSM 17436 / LMG 22146 / PsJN) (Burkholderia phytofirmans).